Consider the following 306-residue polypeptide: HTH-type transcriptional regulator AlkR (306 aa).

Positions 207–305 constitute an HTH araC/xylS-type domain; that stretch reads SNALAAIHAY…EQSPKHYRQQ (99 aa). 2 DNA-binding regions (H-T-H motif) span residues 224 to 245 and 272 to 295; these read ESLADQCCMSRSKFATLFQSIV and IQQIANKVGYSSETAFSQAFKRQF.

It functions in the pathway hydrocarbon metabolism; alkane degradation. Its function is as follows. This protein activates the expression of the alkane 1-monooxygenase AlkM. The protein is HTH-type transcriptional regulator AlkR (alkR) of Acinetobacter baylyi (strain ATCC 33305 / BD413 / ADP1).